The following is a 133-amino-acid chain: Fluoride-specific ion channel FluC (133 aa).

4 helical membrane-spanning segments follow: residues 12-32 (LAMT…ASLI), 41-61 (WGTL…LVWL), 76-96 (IVGV…CLVF), and 104-124 (MIGI…VAGA). Positions 81 and 84 each coordinate Na(+).

This sequence belongs to the fluoride channel Fluc/FEX (TC 1.A.43) family.

Its subcellular location is the cell inner membrane. It carries out the reaction fluoride(in) = fluoride(out). With respect to regulation, na(+) is not transported, but it plays an essential structural role and its presence is essential for fluoride channel function. In terms of biological role, fluoride-specific ion channel. Important for reducing fluoride concentration in the cell, thus reducing its toxicity. This Xanthomonas euvesicatoria pv. vesicatoria (strain 85-10) (Xanthomonas campestris pv. vesicatoria) protein is Fluoride-specific ion channel FluC.